We begin with the raw amino-acid sequence, 356 residues long: Probable arabinogalactan endo-beta-1,4-galactanase A (356 aa).

An N-terminal signal peptide occupies residues 1 to 21 (MLGKTVLLPLLVLLCHSLASA). N-linked (GlcNAc...) asparagine glycosylation occurs at Asn-133. The active-site Proton donor is Glu-157. The active-site Nucleophile is Glu-268.

This sequence belongs to the glycosyl hydrolase 53 family.

The protein resides in the secreted. The enzyme catalyses The enzyme specifically hydrolyzes (1-&gt;4)-beta-D-galactosidic linkages in type I arabinogalactans.. In terms of biological role, endogalactanase involved in the degradation of plant cell wall polysaccharides, and more particularly of hairy regions of pectin. This is Probable arabinogalactan endo-beta-1,4-galactanase A (galA) from Aspergillus fumigatus (strain CBS 144.89 / FGSC A1163 / CEA10) (Neosartorya fumigata).